The chain runs to 644 residues: ATP-dependent zinc metalloprotease FtsH (644 aa).

The Cytoplasmic portion of the chain corresponds to 1–13 (MANNDNKHRRSMS). Residues 14–34 (MLLYIAVAIFVYLLLSNTLLP) traverse the membrane as a helical segment. Over 35–117 (GLLRQQIQTV…SIPDNSANML (83 aa)) the chain is Extracellular. The helical transmembrane segment at 118–138 (MYALIQYGIPLIIFLGIGFFI) threads the bilayer. At 139–644 (NRSLKRAMGD…DEGSSTPSEE (506 aa)) the chain is on the cytoplasmic side. 224–231 (GPPGTGKT) is an ATP binding site. H445 lines the Zn(2+) pocket. E446 is an active-site residue. 2 residues coordinate Zn(2+): H449 and D522.

The protein in the central section; belongs to the AAA ATPase family. In the C-terminal section; belongs to the peptidase M41 family. In terms of assembly, homohexamer. Zn(2+) is required as a cofactor.

Its subcellular location is the cell membrane. Acts as a processive, ATP-dependent zinc metallopeptidase for both cytoplasmic and membrane proteins. Plays a role in the quality control of integral membrane proteins. This is ATP-dependent zinc metalloprotease FtsH from Lancefieldella parvula (strain ATCC 33793 / DSM 20469 / CCUG 32760 / JCM 10300 / KCTC 3663 / VPI 0546 / 1246) (Atopobium parvulum).